Consider the following 582-residue polypeptide: NAB transcription cofactor mab-10 (582 aa).

Residues Met-1 to Ser-70 are compositionally biased toward low complexity. Disordered regions lie at residues Met-1 to Pro-84, Ser-257 to Ile-287, Pro-333 to Leu-365, and Ser-516 to Ser-582. The NCD1 stretch occupies residues Thr-83–Asn-161. Low complexity-rich tracts occupy residues Ser-257–Ser-276 and Pro-333–Ser-345. Residues Leu-396 to Arg-519 form an NCD2 region. A compositionally biased stretch (basic and acidic residues) spans Glu-573–Ser-582.

The protein belongs to the NAB family. Interacts with transcription factor lin-29 (via C-terminus).

Its subcellular location is the nucleus. Transcriptional cofactor. Heterochronic protein, involved in timing of a subset of differentiation events during the larval-to-adult transition. Promotes hypodermal terminal differentiation, together with transcription factor lin-29, perhaps as part of a transcriptional complex. Involved in regulating molting by repressing the expression of nuclear hormone receptors nhr-23 and nhr-25 in the adult hypoderm, probably acting in concert with lin-29. This is NAB transcription cofactor mab-10 from Caenorhabditis elegans.